A 183-amino-acid polypeptide reads, in one-letter code: Peptidyl-tRNA hydrolase (183 aa).

Tyr14 provides a ligand contact to tRNA. His19 (proton acceptor) is an active-site residue. Positions 61, 63, and 109 each coordinate tRNA.

It belongs to the PTH family. Monomer.

It is found in the cytoplasm. It catalyses the reaction an N-acyl-L-alpha-aminoacyl-tRNA + H2O = an N-acyl-L-amino acid + a tRNA + H(+). Hydrolyzes ribosome-free peptidyl-tRNAs (with 1 or more amino acids incorporated), which drop off the ribosome during protein synthesis, or as a result of ribosome stalling. Functionally, catalyzes the release of premature peptidyl moieties from peptidyl-tRNA molecules trapped in stalled 50S ribosomal subunits, and thus maintains levels of free tRNAs and 50S ribosomes. In Aliarcobacter butzleri (strain RM4018) (Arcobacter butzleri), this protein is Peptidyl-tRNA hydrolase.